Reading from the N-terminus, the 158-residue chain is Cyclic pyranopterin monophosphate synthase (158 aa).

Residues 74 to 76 (MCH) and 112 to 113 (ME) contribute to the substrate site. Residue Asp-127 is part of the active site.

It belongs to the MoaC family. Homohexamer; trimer of dimers.

The enzyme catalyses (8S)-3',8-cyclo-7,8-dihydroguanosine 5'-triphosphate = cyclic pyranopterin phosphate + diphosphate. It functions in the pathway cofactor biosynthesis; molybdopterin biosynthesis. Its function is as follows. Catalyzes the conversion of (8S)-3',8-cyclo-7,8-dihydroguanosine 5'-triphosphate to cyclic pyranopterin monophosphate (cPMP). The sequence is that of Cyclic pyranopterin monophosphate synthase from Thermoanaerobacter sp. (strain X514).